The chain runs to 346 residues: Anthranilate phosphoribosyltransferase (346 aa).

Residues G80, 83 to 84 (GD), T88, 90 to 93 (NIST), 108 to 116 (KHGNTAVSS), and S120 contribute to the 5-phospho-alpha-D-ribose 1-diphosphate site. Anthranilate is bound at residue G80. S92 is a Mg(2+) binding site. Residue N111 coordinates anthranilate. R166 is a binding site for anthranilate. D225 and E226 together coordinate Mg(2+).

The protein belongs to the anthranilate phosphoribosyltransferase family. As to quaternary structure, homodimer. It depends on Mg(2+) as a cofactor.

The catalysed reaction is N-(5-phospho-beta-D-ribosyl)anthranilate + diphosphate = 5-phospho-alpha-D-ribose 1-diphosphate + anthranilate. Its pathway is amino-acid biosynthesis; L-tryptophan biosynthesis; L-tryptophan from chorismate: step 2/5. Catalyzes the transfer of the phosphoribosyl group of 5-phosphorylribose-1-pyrophosphate (PRPP) to anthranilate to yield N-(5'-phosphoribosyl)-anthranilate (PRA). The sequence is that of Anthranilate phosphoribosyltransferase from Desulforudis audaxviator (strain MP104C).